Here is a 296-residue protein sequence, read N- to C-terminus: tRNA pseudouridine synthase B (296 aa).

The active-site Nucleophile is aspartate 38.

The protein belongs to the pseudouridine synthase TruB family. Type 1 subfamily.

It catalyses the reaction uridine(55) in tRNA = pseudouridine(55) in tRNA. In terms of biological role, responsible for synthesis of pseudouridine from uracil-55 in the psi GC loop of transfer RNAs. In Ehrlichia chaffeensis (strain ATCC CRL-10679 / Arkansas), this protein is tRNA pseudouridine synthase B.